The primary structure comprises 447 residues: Phosphoglucosamine mutase (447 aa).

Residue Ser-104 is the Phosphoserine intermediate of the active site. Mg(2+) is bound by residues Ser-104, Asp-243, Asp-245, and Asp-247. Ser-104 bears the Phosphoserine mark.

The protein belongs to the phosphohexose mutase family. Requires Mg(2+) as cofactor. In terms of processing, activated by phosphorylation.

The enzyme catalyses alpha-D-glucosamine 1-phosphate = D-glucosamine 6-phosphate. Catalyzes the conversion of glucosamine-6-phosphate to glucosamine-1-phosphate. This is Phosphoglucosamine mutase from Corynebacterium aurimucosum (strain ATCC 700975 / DSM 44827 / CIP 107346 / CN-1) (Corynebacterium nigricans).